A 203-amino-acid polypeptide reads, in one-letter code: V-type ATP synthase subunit D (203 aa).

The protein belongs to the V-ATPase D subunit family.

Its function is as follows. Produces ATP from ADP in the presence of a proton gradient across the membrane. The chain is V-type ATP synthase subunit D from Thermotoga neapolitana (strain ATCC 49049 / DSM 4359 / NBRC 107923 / NS-E).